Reading from the N-terminus, the 1502-residue chain is tRNA (32-2'-O)-methyltransferase regulator trm732 (1502 aa).

Belongs to the THADA family.

Its subcellular location is the cytoplasm. It localises to the nucleus. Together with methyltransferase trm7, methylates the 2'-O-ribose of nucleotides at position 32 of the anticodon loop of substrate tRNAs. This Schizosaccharomyces pombe (strain 972 / ATCC 24843) (Fission yeast) protein is tRNA (32-2'-O)-methyltransferase regulator trm732.